The sequence spans 319 residues: Adenosine receptor A3 (319 aa).

Over 1 to 15 the chain is Extracellular; sequence MEADNTTETDWLNIT. N-linked (GlcNAc...) asparagine glycosylation is found at N5 and N13. A helical transmembrane segment spans residues 16 to 38; it reads YITMEAAIGLCAVVGNMLVIWVV. Over 39-49 the chain is Cytoplasmic; that stretch reads KLNPTLRTTTV. The helical transmembrane segment at 50 to 73 threads the bilayer; the sequence is YFIVSLALADIAVGVLVIPLAIAV. Residues 74 to 85 are Extracellular-facing; the sequence is SLQVKMHFYACL. Cysteines 84 and 167 form a disulfide. The helical transmembrane segment at 86–107 threads the bilayer; that stretch reads FMSCVLLIFTHASIMSLLAIAV. Topologically, residues 108–127 are cytoplasmic; the sequence is HRYLRVKLTVRYRTVTTQRR. The chain crosses the membrane as a helical span at residues 128–149; sequence IWLFLGLCWLVSFLVGLTPMFG. At 150-178 the chain is on the extracellular side; sequence WNRKATLASSQNSSTLLCHFRSVVSLDYM. A glycan (N-linked (GlcNAc...) asparagine) is linked at N161. Residues 179–199 form a helical membrane-spanning segment; sequence VFFSFITWILVPLVVMCIIYL. Over 200–232 the chain is Cytoplasmic; the sequence is DIFYIIRNKLSQNLTGFRETRAFYGREFKTAKS. The helical transmembrane segment at 233-256 threads the bilayer; that stretch reads LFLVLFLFALCWLPLSIINFVSYF. Over 257–262 the chain is Extracellular; sequence DVKIPD. Residues 263–285 traverse the membrane as a helical segment; the sequence is VAMCLGILLSHANSMMNPIVYAC. The Cytoplasmic segment spans residues 286–319; that stretch reads KIKKFKETYFLILRAVRLCQTSDSLDSNMEQTTE. Residue C304 is the site of S-palmitoyl cysteine attachment.

This sequence belongs to the G-protein coupled receptor 1 family. Phosphorylation on Thr-317 and Thr-318 may be crucial for rapid desensitization. Phosphorylation on Thr-317 may be necessary for phosphorylation on Thr-318 to occur.

It is found in the cell membrane. Functionally, receptor for adenosine. The activity of this receptor is mediated by G proteins which inhibits adenylyl cyclase. This chain is Adenosine receptor A3 (Adora3), found in Mus musculus (Mouse).